We begin with the raw amino-acid sequence, 240 residues long: Uridylate kinase (240 aa).

12–15 contributes to the ATP binding site; the sequence is KLSG. The tract at residues 20-25 is involved in allosteric activation by GTP; sequence GKQGFG. A UMP-binding site is contributed by Gly54. Residues Gly55 and Arg59 each coordinate ATP. Residues Asp74 and 135-142 contribute to the UMP site; that span reads TGNPYFST. 3 residues coordinate ATP: Asn163, Tyr169, and Asp172.

Belongs to the UMP kinase family. As to quaternary structure, homohexamer.

Its subcellular location is the cytoplasm. It catalyses the reaction UMP + ATP = UDP + ADP. It functions in the pathway pyrimidine metabolism; CTP biosynthesis via de novo pathway; UDP from UMP (UMPK route): step 1/1. With respect to regulation, allosterically activated by GTP. Inhibited by UTP. Functionally, catalyzes the reversible phosphorylation of UMP to UDP. This chain is Uridylate kinase, found in Geobacillus thermodenitrificans (strain NG80-2).